The primary structure comprises 401 residues: Phosrestin-1 (401 aa).

The protein belongs to the arrestin family. Inner and outer segments, and the inner plexiform regions of the retina.

In terms of biological role, undergoes light-induced phosphorylation, probably plays an important role in the photoreceptor transduction. This chain is Phosrestin-1 (Arr2), found in Drosophila miranda (Fruit fly).